The following is a 322-amino-acid chain: Mitochondrial glutamate carrier 1 (322 aa).

3 Solcar repeats span residues 6–93, 101–214, and 223–312; these read ISLP…FRYQ, LTLF…LNEL, and SPFY…GIAE. 6 consecutive transmembrane segments (helical) span residues 12–32, 62–82, 107–127, 189–209, 223–243, and 292–312; these read LING…IDLA, YFGM…EKAI, MLAG…MEML, GLGA…PLFA, SPFY…AVAV, and ALVI…GIAE.

This sequence belongs to the mitochondrial carrier (TC 2.A.29) family.

The protein localises to the mitochondrion inner membrane. It catalyses the reaction L-glutamate(in) + H(+)(in) = L-glutamate(out) + H(+)(out). In terms of biological role, mitochondrial glutamate/H(+) symporter. Responsible for the transport of glutamate from the cytosol into the mitochondrial matrix with the concomitant import of a proton. Plays a role in the control of glucose-stimulated insulin secretion. This Bos taurus (Bovine) protein is Mitochondrial glutamate carrier 1 (SLC25A22).